The chain runs to 159 residues: Ribosomal RNA large subunit methyltransferase H (159 aa).

S-adenosyl-L-methionine contacts are provided by residues Leu76, Gly108, and 127-132 (FGLLTL).

It belongs to the RNA methyltransferase RlmH family. In terms of assembly, homodimer.

The protein localises to the cytoplasm. The enzyme catalyses pseudouridine(1915) in 23S rRNA + S-adenosyl-L-methionine = N(3)-methylpseudouridine(1915) in 23S rRNA + S-adenosyl-L-homocysteine + H(+). In terms of biological role, specifically methylates the pseudouridine at position 1915 (m3Psi1915) in 23S rRNA. The chain is Ribosomal RNA large subunit methyltransferase H from Leuconostoc citreum (strain KM20).